We begin with the raw amino-acid sequence, 596 residues long: Proline--tRNA ligase (596 aa).

The protein belongs to the class-II aminoacyl-tRNA synthetase family. ProS type 1 subfamily. Homodimer.

The protein resides in the cytoplasm. The catalysed reaction is tRNA(Pro) + L-proline + ATP = L-prolyl-tRNA(Pro) + AMP + diphosphate. Catalyzes the attachment of proline to tRNA(Pro) in a two-step reaction: proline is first activated by ATP to form Pro-AMP and then transferred to the acceptor end of tRNA(Pro). As ProRS can inadvertently accommodate and process non-cognate amino acids such as alanine and cysteine, to avoid such errors it has two additional distinct editing activities against alanine. One activity is designated as 'pretransfer' editing and involves the tRNA(Pro)-independent hydrolysis of activated Ala-AMP. The other activity is designated 'posttransfer' editing and involves deacylation of mischarged Ala-tRNA(Pro). The misacylated Cys-tRNA(Pro) is not edited by ProRS. This is Proline--tRNA ligase from Prochlorococcus marinus (strain NATL2A).